The following is a 235-amino-acid chain: DUP240 protein DFP4 (235 aa).

At 1-44 (MSSELLISNSKPRPEGLRKLCEGETVILPRDITPSKCAYFLKQN) the chain is on the cytoplasmic side. The chain crosses the membrane as a helical span at residues 45-65 (IVFISYIFIHIIITIILNRLA). Topologically, residues 66 to 72 (LSAHGNT) are extracellular. A helical membrane pass occupies residues 73–93 (LIIILAALLITISLFLLLLLP). Over 94-235 (YLSCSRYKLR…DKYPEMGVTV (142 aa)) the chain is Cytoplasmic.

Belongs to the DUP/COS family. As to quaternary structure, interacts according to large scale protein interaction studies with BZZ1, SRB4 and SUA7.

Its subcellular location is the cell membrane. The chain is DUP240 protein DFP4 from Saccharomyces cerevisiae (strain ATCC 204508 / S288c) (Baker's yeast).